The chain runs to 141 residues: Putative antiporter subunit mnhB2 (141 aa).

The next 4 membrane-spanning stretches (helical) occupy residues 10 to 30, 35 to 55, 70 to 90, and 116 to 136; these read SVTK…FFAG, GGGF…FLAF, KLMI…MFFG, and LFEL…MLSI.

The protein belongs to the CPA3 antiporters (TC 2.A.63) subunit B family. In terms of assembly, may form a heterooligomeric complex that consists of seven subunits: mnhA2, mnhB2, mnhC2, mnhD2, mnhE2, mnhF2 and mnhG2.

The protein localises to the cell membrane. The polypeptide is Putative antiporter subunit mnhB2 (mnhB2) (Staphylococcus epidermidis (strain ATCC 35984 / DSM 28319 / BCRC 17069 / CCUG 31568 / BM 3577 / RP62A)).